The chain runs to 442 residues: C4-dicarboxylate transport protein (442 aa).

8 consecutive transmembrane segments (helical) span residues 10–30 (VQVLIAIALGILTGFLFPSLG), 40–60 (FIKLIKMIIAPIIFATVVSGI), 77–97 (LLYFELVTTFALVIGLVIVNI), 144–164 (FTQGDLLQVLLVAVLFGFALL), 183–203 (VIFVILGFVMRLAPIGAFGAM), 221–241 (LMITFYATCALFIFGVLGLIA), 331–351 (LLGVLLLTSKGAAGVTGSGFI), and 354–374 (AATLSAVGDVPVAGLALILGI). Positions 418-442 (LPTIEPDVHSEERGEGRELDSLRPA) are disordered. Residues 423-442 (PDVHSEERGEGRELDSLRPA) show a composition bias toward basic and acidic residues.

It belongs to the dicarboxylate/amino acid:cation symporter (DAACS) (TC 2.A.23) family.

The protein resides in the cell membrane. Functionally, responsible for the transport of dicarboxylates such as succinate, fumarate, and malate across the membrane. The chain is C4-dicarboxylate transport protein from Deinococcus deserti (strain DSM 17065 / CIP 109153 / LMG 22923 / VCD115).